We begin with the raw amino-acid sequence, 211 residues long: ATP phosphoribosyltransferase (211 aa).

The protein belongs to the ATP phosphoribosyltransferase family. Short subfamily. Heteromultimer composed of HisG and HisZ subunits.

Its subcellular location is the cytoplasm. It carries out the reaction 1-(5-phospho-beta-D-ribosyl)-ATP + diphosphate = 5-phospho-alpha-D-ribose 1-diphosphate + ATP. It functions in the pathway amino-acid biosynthesis; L-histidine biosynthesis; L-histidine from 5-phospho-alpha-D-ribose 1-diphosphate: step 1/9. Catalyzes the condensation of ATP and 5-phosphoribose 1-diphosphate to form N'-(5'-phosphoribosyl)-ATP (PR-ATP). Has a crucial role in the pathway because the rate of histidine biosynthesis seems to be controlled primarily by regulation of HisG enzymatic activity. The sequence is that of ATP phosphoribosyltransferase from Bacillus cereus (strain G9842).